We begin with the raw amino-acid sequence, 207 residues long: rRNA N(6)-adenosine-methyltransferase METTL5 (207 aa).

S-adenosyl-L-methionine contacts are provided by residues Q25, T28, G56, C59, V61, D78, and 105-106 (DV).

Belongs to the methyltransferase superfamily. PrmA family.

Its subcellular location is the nucleus. It is found in the presynapse. It localises to the postsynapse. The catalysed reaction is adenosine(1832) in 18S rRNA + S-adenosyl-L-methionine = N(6)-methyladenosine(1832) in 18S rRNA + S-adenosyl-L-homocysteine + H(+). RRNA N6-adenosine-methyltransferase activity is inhibited by zinc. Its function is as follows. Catalytic subunit of a heterodimer with TRMT112, which specifically methylates the 6th position of adenine in position 1832 of 18S rRNA. N6-methylation of adenine(1832) in 18S rRNA resides in the decoding center of 18S rRNA and is required for translation and embryonic stem cells (ESCs) pluripotency and differentiation. The polypeptide is rRNA N(6)-adenosine-methyltransferase METTL5 (Danio rerio (Zebrafish)).